Here is a 276-residue protein sequence, read N- to C-terminus: Dermonecrotic toxin LdSicTox-alphaIB2 (276 aa).

Histidine 5 is an active-site residue. Mg(2+) is bound by residues glutamate 25 and aspartate 27. Residue histidine 41 is the Nucleophile of the active site. Cystine bridges form between cysteine 45/cysteine 51 and cysteine 47/cysteine 190. Aspartate 85 is a binding site for Mg(2+). An N-linked (GlcNAc...) asparagine glycan is attached at asparagine 253.

The protein belongs to the arthropod phospholipase D family. Class II subfamily. Requires Mg(2+) as cofactor. In terms of tissue distribution, expressed by the venom gland.

Its subcellular location is the secreted. It carries out the reaction an N-(acyl)-sphingosylphosphocholine = an N-(acyl)-sphingosyl-1,3-cyclic phosphate + choline. It catalyses the reaction an N-(acyl)-sphingosylphosphoethanolamine = an N-(acyl)-sphingosyl-1,3-cyclic phosphate + ethanolamine. The enzyme catalyses a 1-acyl-sn-glycero-3-phosphocholine = a 1-acyl-sn-glycero-2,3-cyclic phosphate + choline. The catalysed reaction is a 1-acyl-sn-glycero-3-phosphoethanolamine = a 1-acyl-sn-glycero-2,3-cyclic phosphate + ethanolamine. In terms of biological role, dermonecrotic toxins cleave the phosphodiester linkage between the phosphate and headgroup of certain phospholipids (sphingolipid and lysolipid substrates), forming an alcohol (often choline) and a cyclic phosphate. This toxin acts on sphingomyelin (SM). It may also act on ceramide phosphoethanolamine (CPE), lysophosphatidylcholine (LPC) and lysophosphatidylethanolamine (LPE), but not on lysophosphatidylserine (LPS), and lysophosphatidylglycerol (LPG). It acts by transphosphatidylation, releasing exclusively cyclic phosphate products as second products. Induces dermonecrosis, hemolysis, increased vascular permeability, edema, inflammatory response, and platelet aggregation. This chain is Dermonecrotic toxin LdSicTox-alphaIB2, found in Loxosceles deserta (Desert recluse spider).